The chain runs to 402 residues: Odorant receptor 22c (402 aa).

Topologically, residues 1–42 are cytoplasmic; sequence MTDSGQPAIADHFYRIPRISGLIVGLWPQRIRGGGGRPWHAH. Residues 43 to 63 traverse the membrane as a helical segment; it reads LLFVFAFAMVVVGAVGEVSYG. Residues 64–73 lie on the Extracellular side of the membrane; it reads CVHLDNLVVA. The helical transmembrane segment at 74–94 threads the bilayer; the sequence is LEAFCPGTTKAVCVLKLWVFF. Over 95–134 the chain is Cytoplasmic; the sequence is RSNRRWAELVQRLRAILWESRRQEAQRMLVGLATTANRLS. The chain crosses the membrane as a helical span at residues 135–155; sequence LLLLSSGTATNAAFTLQPLIM. The Extracellular segment spans residues 156–173; it reads GLYRWIVQLPGQTELPFN. A helical membrane pass occupies residues 174-194; sequence IILPSFAVQPGVFPLTYVLLT. At 195–201 the chain is on the cytoplasmic side; that stretch reads ASGACTV. A helical membrane pass occupies residues 202–222; that stretch reads FAFSFVDGFFICSCLYICGAF. The Extracellular portion of the chain corresponds to 223–276; the sequence is RLVQQDIRRIFADLHGDSVDVFTEEMNAEVRHRLAQVVERHNAIIDFCTDLTRQ. A helical transmembrane segment spans residues 277–297; that stretch reads FTVIVLMHFLSAAFVLCSTIL. Over 298–307 the chain is Cytoplasmic; sequence DIMLNTSSLS. Residues 308 to 328 traverse the membrane as a helical segment; sequence GLTYICYIIAALTQLFLYCFG. The Extracellular segment spans residues 329-402; it reads GNHVSESSAA…SYITLLKTFL (74 aa).

Belongs to the insect chemoreceptor superfamily. Heteromeric odorant receptor channel (TC 1.A.69) family. Or1a subfamily. As to quaternary structure, interacts with Orco. Complexes exist early in the endomembrane system in olfactory sensory neurons (OSNs), coupling these complexes to the conserved ciliary trafficking pathway. As to expression, not expressed in either the antenna or maxillary palp.

It localises to the cell membrane. Functionally, odorant receptor which mediates acceptance or avoidance behavior, depending on its substrates. The odorant receptor repertoire encodes a large collection of odor stimuli that vary widely in identity, intensity, and duration. May form a complex with Orco to form odorant-sensing units, providing sensitive and prolonged odorant signaling and calcium permeability. In Drosophila melanogaster (Fruit fly), this protein is Odorant receptor 22c (Or22c).